The primary structure comprises 183 residues: Adenine phosphoribosyltransferase (183 aa).

Belongs to the purine/pyrimidine phosphoribosyltransferase family. Homodimer.

The protein localises to the cytoplasm. It carries out the reaction AMP + diphosphate = 5-phospho-alpha-D-ribose 1-diphosphate + adenine. It functions in the pathway purine metabolism; AMP biosynthesis via salvage pathway; AMP from adenine: step 1/1. In terms of biological role, catalyzes a salvage reaction resulting in the formation of AMP, that is energically less costly than de novo synthesis. The chain is Adenine phosphoribosyltransferase from Escherichia coli O157:H7.